The sequence spans 396 residues: Metallophosphoesterase 1 (396 aa).

A helical transmembrane segment spans residues 27 to 47; the sequence is IAVVFAVLLFCEFLIYYLAIF. Residues Asp77, Asp119, Asn157, His249, His303, and His305 each coordinate a divalent metal cation. The helical transmembrane segment at 356–376 threads the bilayer; sequence VVLVIYCGAVGFLVVLTLSHL. Residues 392–396 carry the Di-lysine motif motif; sequence KRKTR.

Belongs to the metallophosphoesterase superfamily. MPPE1 family. As to quaternary structure, interacts with GPI-anchor proteins (via the GPI portion). Interacts with TMED10. The cofactor is Mn(2+).

The protein resides in the endoplasmic reticulum-Golgi intermediate compartment membrane. In terms of biological role, metallophosphoesterase that catalyzes the removal of a side-chain ethanolamine-phosphate (EtNP) from the second mannose of the GPI-anchor protein intermediate. Participates in the glycan remodeling steps of GPI-anchor maturation to allow an efficient transport of GPI-anchor proteins from the endoplasmic reticulum to the Golgi. In Macaca fascicularis (Crab-eating macaque), this protein is Metallophosphoesterase 1.